Here is a 650-residue protein sequence, read N- to C-terminus: Chaperone protein DnaK (650 aa).

A Phosphothreonine; by autocatalysis modification is found at Thr200. A disordered region spans residues 613-634 (QAGAAGAAGAAEGAAHAGGAQQ).

It belongs to the heat shock protein 70 family.

In terms of biological role, acts as a chaperone. This is Chaperone protein DnaK from Burkholderia vietnamiensis (strain G4 / LMG 22486) (Burkholderia cepacia (strain R1808)).